The chain runs to 122 residues: MFLRSTFVAALVACLAYIHLGDATEAMPKVQIYSRNVGELGKPNTLICHVSGFHPPNIKLQLLKNDVEIEGAQQSDLAFHQGWHFHLTKSVAFTPKEGEHYSCKVEHSTLREATRFTWTPDM.

The first 23 residues, M1–A23, serve as a signal peptide directing secretion. Positions P28–T117 constitute an Ig-like C1-type domain. C48 and C103 are joined by a disulfide.

It belongs to the beta-2-microglobulin family. Heterodimer of an alpha chain and a beta chain. Beta-2-microglobulin is the beta-chain of major histocompatibility complex class I molecules.

It is found in the secreted. Its function is as follows. Component of the class I major histocompatibility complex (MHC). Involved in the presentation of peptide antigens to the immune system. This is Beta-2-microglobulin (b2m) from Acipenser baerii (Siberian sturgeon).